The sequence spans 304 residues: Ribosome-inactivating protein 9 (304 aa).

E208 is an active-site residue.

The protein belongs to the ribosome-inactivating protein family. Type 1 RIP subfamily. As to quaternary structure, monomer. Accumulates to high levels in seeds.

Its subcellular location is the cytoplasm. The enzyme catalyses Endohydrolysis of the N-glycosidic bond at one specific adenosine on the 28S rRNA.. Functionally, possesses features of some constitutive defense agent. The coordinate Opaque-2-controlled synthesis of this protein and the major seed storage proteins (zeins) may provide the germinating seedling with both nutritional benefits and protection against pathogen invasion of the surrounding endosperm. The sequence is that of Ribosome-inactivating protein 9 (CRIP9) from Zea mays (Maize).